Here is a 157-residue protein sequence, read N- to C-terminus: DNA gyrase inhibitor (157 aa).

It belongs to the DNA gyrase inhibitor family. In terms of assembly, interacts with DNA gyrase.

The protein localises to the cytoplasm. Functionally, inhibits the supercoiling activity of DNA gyrase. Acts by inhibiting DNA gyrase at an early step, prior to (or at the step of) binding of DNA by the gyrase. It protects cells against toxins that target DNA gyrase, by inhibiting activity of these toxins and reducing the formation of lethal double-strand breaks in the cell. The sequence is that of DNA gyrase inhibitor from Cronobacter turicensis (strain DSM 18703 / CCUG 55852 / LMG 23827 / z3032).